Here is a 479-residue protein sequence, read N- to C-terminus: Ribosomal RNA small subunit methyltransferase F (479 aa).

Residues 125–131 (AAAPGSK), Glu149, Asp176, and Asp194 each bind S-adenosyl-L-methionine. Cys247 (nucleophile) is an active-site residue.

This sequence belongs to the class I-like SAM-binding methyltransferase superfamily. RsmB/NOP family.

It is found in the cytoplasm. It carries out the reaction cytidine(1407) in 16S rRNA + S-adenosyl-L-methionine = 5-methylcytidine(1407) in 16S rRNA + S-adenosyl-L-homocysteine + H(+). In terms of biological role, specifically methylates the cytosine at position 1407 (m5C1407) of 16S rRNA. This is Ribosomal RNA small subunit methyltransferase F from Citrobacter koseri (strain ATCC BAA-895 / CDC 4225-83 / SGSC4696).